Consider the following 120-residue polypeptide: Large ribosomal subunit protein uL18 (120 aa).

The protein belongs to the universal ribosomal protein uL18 family. Part of the 50S ribosomal subunit; part of the 5S rRNA/L5/L18/L25 subcomplex. Contacts the 5S and 23S rRNAs.

Its function is as follows. This is one of the proteins that bind and probably mediate the attachment of the 5S RNA into the large ribosomal subunit, where it forms part of the central protuberance. The polypeptide is Large ribosomal subunit protein uL18 (Bacillus licheniformis (strain ATCC 14580 / DSM 13 / JCM 2505 / CCUG 7422 / NBRC 12200 / NCIMB 9375 / NCTC 10341 / NRRL NRS-1264 / Gibson 46)).